The chain runs to 778 residues: Endonuclease MutS2 (778 aa).

An ATP-binding site is contributed by 328 to 335 (GPNTGGKT). Residues 702 to 777 (LDLRGKRYEE…GSGATIVTFK (76 aa)) form the Smr domain.

Belongs to the DNA mismatch repair MutS family. MutS2 subfamily. Homodimer. Binds to stalled ribosomes, contacting rRNA.

In terms of biological role, endonuclease that is involved in the suppression of homologous recombination and thus may have a key role in the control of bacterial genetic diversity. Its function is as follows. Acts as a ribosome collision sensor, splitting the ribosome into its 2 subunits. Detects stalled/collided 70S ribosomes which it binds and splits by an ATP-hydrolysis driven conformational change. Acts upstream of the ribosome quality control system (RQC), a ribosome-associated complex that mediates the extraction of incompletely synthesized nascent chains from stalled ribosomes and their subsequent degradation. Probably generates substrates for RQC. The protein is Endonuclease MutS2 of Streptococcus pneumoniae (strain P1031).